A 778-amino-acid polypeptide reads, in one-letter code: Beta-phellandrene synthase (neryl-diphosphate-cyclizing), chloroplastic (778 aa).

The transit peptide at 1 to 36 directs the protein to the chloroplast; it reads MIVGYRSTIITLSHPKLGNGKTISSNAIFQRSCRVR. Mg(2+)-binding residues include D531, N676, and E684. The short motif at 531-535 is the DDXXD motif element; that stretch reads DDHFE.

Belongs to the terpene synthase family. Tpse subfamily. Requires Mg(2+) as cofactor. In terms of tissue distribution, trichomes.

It localises to the plastid. Its subcellular location is the chloroplast. The catalysed reaction is neryl diphosphate = beta-phellandrene + diphosphate. In terms of biological role, monoterpene synthase catalyzing the production of beta-phellandrene from neryl diphosphate. Also produces lower amounts of delta-2-carene, alpha-phellandrene and limonene. When incubated in vitro with geranyl diphosphate, catalyzes the formation of acyclic myrcene and ocimene as major products in addition to beta-phellandrene. This chain is Beta-phellandrene synthase (neryl-diphosphate-cyclizing), chloroplastic (PHS1), found in Solanum lycopersicum (Tomato).